The chain runs to 195 residues: Cysteine/O-acetylserine efflux protein (195 aa).

Over 1–7 (MTPTLLS) the chain is Periplasmic. The helical transmembrane segment at 8-28 (AFWTYTLITAMTPGPNNILAL) threads the bilayer. At 29 to 46 (SSATTHGFHQSTRVLAGM) the chain is on the cytoplasmic side. A helical membrane pass occupies residues 47–67 (SLGFLIVMLLCAGISFSLAVI). Residues 68-69 (DP) are Periplasmic-facing. The chain crosses the membrane as a helical span at residues 70–90 (AAVHLLSWAGAAYIVWLAWKI). Residues 91–104 (ATSPTKEDGLQTKP) lie on the Cytoplasmic side of the membrane. Residues 105-125 (ISFWASFALQFVNVKIILYGV) traverse the membrane as a helical segment. Over 126 to 141 (TALSTFVLPQTQALSW) the chain is Periplasmic. A helical membrane pass occupies residues 142–162 (IVGVSVLLAMIGTFGNVCWAL). Topologically, residues 163–176 (AGHLFQRLFRQYGR) are cytoplasmic. The chain crosses the membrane as a helical span at residues 177–194 (QLNIVLALLLIYCAVRIF). A topological domain (periplasmic) is located at residue tyrosine 195.

The protein belongs to the Rht family.

It localises to the cell inner membrane. It catalyses the reaction O-acetyl-L-serine(in) = O-acetyl-L-serine(out). The catalysed reaction is L-cysteine(in) = L-cysteine(out). Functionally, exporter of O-acetylserine (OAS) and cysteine. The protein is Cysteine/O-acetylserine efflux protein (eamB) of Escherichia coli O157:H7.